A 231-amino-acid polypeptide reads, in one-letter code: Quercetin 2,3-dioxygenase (231 aa).

Residues H57, H59, H101, and E103 each coordinate a divalent metal cation.

It belongs to the pirin family. The cofactor is Zn(2+). Co(2+) serves as cofactor. It depends on Fe(2+) as a cofactor.

It catalyses the reaction quercetin + O2 = 2-(3,4-dihydroxybenzoyloxy)-4,6-dihydroxybenzoate + CO. It functions in the pathway flavonoid metabolism; quercetin degradation. Has quercetin 2,3-dioxygenase activity in vitro. Its physiological role is unknown; however, may provide a mechanism that would avoid inhibition of key cellular proteins, such as DNA gyrase, by quercetin. This Escherichia coli O157:H7 protein is Quercetin 2,3-dioxygenase (yhhW).